Consider the following 549-residue polypeptide: ATP synthase subunit alpha (549 aa).

172–179 provides a ligand contact to ATP; it reads GDRKTGKT. The tract at residues 513 to 549 is disordered; that stretch reads SSTGESVVPDEHVEAMDEEDLGKESVKVKKPAPQKKK. A compositionally biased stretch (basic residues) spans 540–549; sequence VKKPAPQKKK.

It belongs to the ATPase alpha/beta chains family. In terms of assembly, F-type ATPases have 2 components, CF(1) - the catalytic core - and CF(0) - the membrane proton channel. CF(1) has five subunits: alpha(3), beta(3), gamma(1), delta(1), epsilon(1). CF(0) has three main subunits: a(1), b(2) and c(9-12). The alpha and beta chains form an alternating ring which encloses part of the gamma chain. CF(1) is attached to CF(0) by a central stalk formed by the gamma and epsilon chains, while a peripheral stalk is formed by the delta and b chains.

It localises to the cell membrane. It carries out the reaction ATP + H2O + 4 H(+)(in) = ADP + phosphate + 5 H(+)(out). Produces ATP from ADP in the presence of a proton gradient across the membrane. The alpha chain is a regulatory subunit. The protein is ATP synthase subunit alpha of Mycobacterium ulcerans (strain Agy99).